Reading from the N-terminus, the 119-residue chain is MVIDIVTNQFSNLQNIKIFTWKANFESIRINLQHMHLYHYEHIHLFTSSQSYMYHPNARFSYSPFCCFTDTLAYLRCEPYRGYRKCIYRKVKMPNLILRNPLVRYDVSPARYPTIGIRS.

It is found in the mitochondrion. Its subcellular location is the nucleus. This is an uncharacterized protein from Schizosaccharomyces pombe (strain 972 / ATCC 24843) (Fission yeast).